A 406-amino-acid polypeptide reads, in one-letter code: Tryptophan synthase beta chain (406 aa).

At Lys97 the chain carries N6-(pyridoxal phosphate)lysine.

This sequence belongs to the TrpB family. In terms of assembly, tetramer of two alpha and two beta chains. The cofactor is pyridoxal 5'-phosphate.

The catalysed reaction is (1S,2R)-1-C-(indol-3-yl)glycerol 3-phosphate + L-serine = D-glyceraldehyde 3-phosphate + L-tryptophan + H2O. Its pathway is amino-acid biosynthesis; L-tryptophan biosynthesis; L-tryptophan from chorismate: step 5/5. Functionally, the beta subunit is responsible for the synthesis of L-tryptophan from indole and L-serine. This Lacticaseibacillus paracasei (strain ATCC 334 / BCRC 17002 / CCUG 31169 / CIP 107868 / KCTC 3260 / NRRL B-441) (Lactobacillus paracasei) protein is Tryptophan synthase beta chain.